Consider the following 488-residue polypeptide: MMLKSVTESFAGMIHGLKVNHLTDGIIRRSKRMILDSLGVGFLGTGTEVFHKVTQYSKIYSSNTSSTVWGRPDFRLPPTYAAFVNGVAVHSMDFDDTWHPATHPSGAVLPVLTALSEALPQIPKFSGLDLLLAFNVGIEVQGRLMHFSKEAKDIPKRFHPPSVVGTLGSAAAASKFLGLSLTKCREALAIAVSHAGAPIANAATQTKPLHIGNAAKHGMEATFLAMLGLQGNKQILDLGSGFGAFYANYSPEDLPSLDSHIWLLDQQDVAFKSFPAHLATHWVADAAAAVRKHLVTPERALFPADHIERIVLRIPDVQYVNRPFPDSEHEARHSFQYVACASLLDGSITVPSFHSQQVNRPQVRELLKKVKLEHPPDNPPSFDTLYCEISITLKDGTTFTERSDTFYGHWRKPLSQEDLRNKFRANASKMLCRDTVESLITVVEKLEDLEDCSVLTRLLKGPSVQDEASKLSSMSSFDHTTLPRFTNI.

Belongs to the PrpD family. In terms of assembly, homodimer. As to expression, expressed in LPS-tolerized macrophages (at protein level). Expressed in the luminal epithelial cells of pregnant uterus. Expressed in microglia and macrophage cells.

Its subcellular location is the mitochondrion. It catalyses the reaction cis-aconitate + H(+) = itaconate + CO2. Its function is as follows. Cis-aconitate decarboxylase that catalyzes production of itaconate and is involved in the inhibition of the inflammatory response. Acts as a negative regulator of the Toll-like receptors (TLRs)-mediated inflammatory innate response by stimulating the tumor necrosis factor alpha-induced protein TNFAIP3 expression via reactive oxygen species (ROS) in LPS-tolerized macrophages. Involved in antimicrobial response of innate immune cells; ACOD1-mediated itaconic acid production contributes to the antimicrobial activity of macrophages by generating itaconate, leading to alkylation of proteins, such as TFEB. Involved in antiviral response following infection by flavivirus in neurons: ACOD1-mediated itaconate production inhibits the activity of succinate dehydrogenase, generating a metabolic state in neurons that suppresses replication of viral genomes. Plays a role in the embryo implantation. In Mus musculus (Mouse), this protein is Cis-aconitate decarboxylase.